Reading from the N-terminus, the 148-residue chain is Truncated transcription factor CAULIFLOWER C (148 aa).

In terms of domain architecture, MADS-box spans 1 to 61; sequence MGRGRVEMKR…GKLFEYSSES (61 aa). A K-box; partial domain is found at 90–148; that stretch reads QTNWSMEYSRLKAKIELWERNQRHYLGEDLESISIKELQNLEQQLDTSLKHIPSRKVCK.

Homodimer capable of binding to CArG-box sequences.

The protein localises to the nucleus. Functionally, probable transcription factor that promotes early floral meristem identity in synergy with APETALA1, FRUITFULL and LEAFY. Is required subsequently for the transition of an inflorescence meristem into a floral meristem. Seems to be partially redundant to the function of APETALA1. The protein is Truncated transcription factor CAULIFLOWER C (CAL-C) of Brassica oleracea var. botrytis (Cauliflower).